The following is an 87-amino-acid chain: Chaperone NapD (87 aa).

It belongs to the NapD family. In terms of assembly, interacts with the cytoplasmic NapA precursor.

It localises to the cytoplasm. Chaperone for NapA, the catalytic subunit of the periplasmic nitrate reductase. It binds directly and specifically to the twin-arginine signal peptide of NapA, preventing premature interaction with the Tat translocase and premature export. The polypeptide is Chaperone NapD (Escherichia coli O157:H7).